The following is a 418-amino-acid chain: Putative heat shock protein HSP 90-alpha A4 (418 aa).

Positions 33, 52, 78, and 204 each coordinate ATP. Disordered stretches follow at residues 255–289 (EDLE…TSAK) and 383–418 (GLGT…RMEK). Positions 265–274 (EKKKQEEGKQ) are enriched in basic and acidic residues.

It belongs to the heat shock protein 90 family. Homodimer.

The protein localises to the cytoplasm. Putative molecular chaperone that may promote the maturation, structural maintenance and proper regulation of specific target proteins. In Homo sapiens (Human), this protein is Putative heat shock protein HSP 90-alpha A4 (HSP90AA4P).